The chain runs to 751 residues: Catalase-peroxidase (751 aa).

Positions W92–Y240 form a cross-link, tryptophyl-tyrosyl-methioninium (Trp-Tyr) (with M-266). Residue H93 is the Proton acceptor of the active site. Positions Y240–M266 form a cross-link, tryptophyl-tyrosyl-methioninium (Tyr-Met) (with W-92). H281 provides a ligand contact to heme b.

The protein belongs to the peroxidase family. Peroxidase/catalase subfamily. As to quaternary structure, homodimer or homotetramer. The cofactor is heme b. Post-translationally, formation of the three residue Trp-Tyr-Met cross-link is important for the catalase, but not the peroxidase activity of the enzyme.

Its subcellular location is the cytoplasm. It catalyses the reaction H2O2 + AH2 = A + 2 H2O. The enzyme catalyses 2 H2O2 = O2 + 2 H2O. Functionally, bifunctional enzyme with both catalase and broad-spectrum peroxidase activity. In Phaeosphaeria nodorum (strain SN15 / ATCC MYA-4574 / FGSC 10173) (Glume blotch fungus), this protein is Catalase-peroxidase.